A 258-amino-acid polypeptide reads, in one-letter code: Exu regulon transcriptional regulator (258 aa).

The region spanning 7 to 75 (RRLYQQLAAD…KGSGIHVVSN (69 aa)) is the HTH gntR-type domain. Residues 35 to 54 (ERFIADEKNVSRTVVREAII) constitute a DNA-binding region (H-T-H motif).

Its function is as follows. Repressor for the exu regulon that encode genes involved in hexuronate utilization. It regulates the ExuT, UxaCA and UxuRAB operons. Binds D-tagaturonate and D-fructuronate as inducers. The polypeptide is Exu regulon transcriptional regulator (exuR) (Escherichia coli O157:H7).